Consider the following 449-residue polypeptide: Cryptochrome DASH (449 aa).

Positions 15–147 constitute a Photolyase/cryptochrome alpha/beta domain; the sequence is RLGLFVFRND…PFHETPNNTL (133 aa).

This sequence belongs to the DNA photolyase class-1 family. Requires FAD as cofactor. (6R)-5,10-methylene-5,6,7,8-tetrahydrofolate is required as a cofactor.

In terms of biological role, may have a photoreceptor function. Binds DNA; probably functions as a transcriptional repressor. The chain is Cryptochrome DASH (cry) from Idiomarina loihiensis (strain ATCC BAA-735 / DSM 15497 / L2-TR).